The sequence spans 488 residues: Glutamate--tRNA ligase (488 aa).

Residues 9–19 (PSPTGFLHIGG) carry the 'HIGH' region motif. The Zn(2+) site is built by cysteine 112, cysteine 114, cysteine 139, and histidine 141. The short motif at 256-260 (KLSKR) is the 'KMSKS' region element. Lysine 259 is a binding site for ATP.

Belongs to the class-I aminoacyl-tRNA synthetase family. Glutamate--tRNA ligase type 1 subfamily. In terms of assembly, monomer. Zn(2+) serves as cofactor.

Its subcellular location is the cytoplasm. It carries out the reaction tRNA(Glu) + L-glutamate + ATP = L-glutamyl-tRNA(Glu) + AMP + diphosphate. In terms of biological role, catalyzes the attachment of glutamate to tRNA(Glu) in a two-step reaction: glutamate is first activated by ATP to form Glu-AMP and then transferred to the acceptor end of tRNA(Glu). This is Glutamate--tRNA ligase from Elusimicrobium minutum (strain Pei191).